A 246-amino-acid polypeptide reads, in one-letter code: tRNA pseudouridine synthase A (246 aa).

Asp52 acts as the Nucleophile in catalysis. Tyr111 is a substrate binding site.

It belongs to the tRNA pseudouridine synthase TruA family. In terms of assembly, homodimer.

The catalysed reaction is uridine(38/39/40) in tRNA = pseudouridine(38/39/40) in tRNA. In terms of biological role, formation of pseudouridine at positions 38, 39 and 40 in the anticodon stem and loop of transfer RNAs. The protein is tRNA pseudouridine synthase A of Borrelia garinii subsp. bavariensis (strain ATCC BAA-2496 / DSM 23469 / PBi) (Borreliella bavariensis).